The primary structure comprises 268 residues: Large ribosomal subunit protein mL46 (268 aa).

The N-terminal 25 residues, 1–25 (MYLKRNIINMQRSFSRQFHISVRNS), are a transit peptide targeting the mitochondrion.

It belongs to the mitochondrion-specific ribosomal protein mL46 family. Component of the mitochondrial large ribosomal subunit (mt-LSU). Mature yeast 74S mitochondrial ribosomes consist of a small (37S) and a large (54S) subunit. The 37S small subunit contains a 15S ribosomal RNA (15S mt-rRNA) and at least 32 different proteins. The 54S large subunit contains a 21S rRNA (21S mt-rRNA) and at least 45 different proteins.

The protein resides in the mitochondrion. Its function is as follows. Component of the mitochondrial ribosome (mitoribosome), a dedicated translation machinery responsible for the synthesis of mitochondrial genome-encoded proteins, including at least some of the essential transmembrane subunits of the mitochondrial respiratory chain. The mitoribosomes are attached to the mitochondrial inner membrane and translation products are cotranslationally integrated into the membrane. The protein is Large ribosomal subunit protein mL46 (mrpl17) of Schizosaccharomyces pombe (strain 972 / ATCC 24843) (Fission yeast).